The following is a 124-amino-acid chain: Large ribosomal subunit protein eL31 (124 aa).

Position 102 is a phosphotyrosine (Y102).

The protein belongs to the eukaryotic ribosomal protein eL31 family.

This chain is Large ribosomal subunit protein eL31 (RpL31), found in Drosophila melanogaster (Fruit fly).